A 327-amino-acid chain; its full sequence is Ornithine carbamoyltransferase 2, anabolic (327 aa).

Residues Arg-109 and 136-139 (HPTQ) each bind carbamoyl phosphate. L-ornithine is bound by residues Asn-168, Asp-232, and 236–237 (SM). Carbamoyl phosphate contacts are provided by residues 273 to 274 (CL) and Arg-313.

It belongs to the aspartate/ornithine carbamoyltransferase superfamily. OTCase family. Homotrimer.

The protein resides in the cytoplasm. It carries out the reaction carbamoyl phosphate + L-ornithine = L-citrulline + phosphate + H(+). It functions in the pathway amino-acid biosynthesis; L-arginine biosynthesis; L-arginine from L-ornithine and carbamoyl phosphate: step 1/3. Plays an important role in the survival and pathogenicity of P.syringae. Phaseolotoxin is a virulence factor that inhibits the catalysis of the host OTCase. Phaseolotoxin-producing bacteria do not suffer autointoxication because they possess the anabolic OTCase ArgK which can function even in the presence of phaseolotoxin. Reversibly catalyzes the transfer of the carbamoyl group from carbamoyl phosphate (CP) to the N(epsilon) atom of ornithine (ORN) to produce L-citrulline, which is a substrate for argininosuccinate synthetase, the enzyme involved in the final step in arginine biosynthesis. In Pseudomonas savastanoi pv. phaseolicola (Pseudomonas syringae pv. phaseolicola), this protein is Ornithine carbamoyltransferase 2, anabolic.